Reading from the N-terminus, the 804-residue chain is DNA mismatch repair protein MutS (804 aa).

614 to 621 provides a ligand contact to ATP; that stretch reads GPNMAGKS.

This sequence belongs to the DNA mismatch repair MutS family.

This protein is involved in the repair of mismatches in DNA. It is possible that it carries out the mismatch recognition step. This protein has a weak ATPase activity. The polypeptide is DNA mismatch repair protein MutS (Ehrlichia chaffeensis (strain ATCC CRL-10679 / Arkansas)).